An 830-amino-acid chain; its full sequence is WD repeat-containing protein 75 (830 aa).

WD repeat units lie at residues 4–43 (EENIRVVRCGGSELNFRRAVFSADSKYIFCVSGDFVKVYS), 47–86 (EECVHILHGHRNLVTGIQLNPNNHLQLYSCSLDGTIKLWD), 90–131 (GILI…QLVS), 145–184 (KELSFVLDYINQSPKCIAFGNEGVYVAAVREFYLSVYFFK), 193–231 (LSSSRNKKHAKNNFTCVACHPTEDCIASGHMDGKIRLWR), 237–276 (KKYTYTCLHWHHDMVMDLAFSVTGTSLLSGGRESVLVEWR), 279–318 (TEKNKEFLPRLGATIEHISVSPAGDLFCTSHSDNKIIIIH), 324–362 (SAVIQGLVKDRSIFTGLMIDPRTKALVLNGKPGHLQFYS), and 376–423 (QQEY…KLWM). A Glycyl lysine isopeptide (Lys-Gly) (interchain with G-Cter in SUMO2) cross-link involves residue lysine 123. Residue lysine 427 forms a Glycyl lysine isopeptide (Lys-Gly) (interchain with G-Cter in SUMO2) linkage. WD repeat units lie at residues 430 to 474 (GFIL…KVWI), 487 to 525 (GWTCDFVGSYHKYQATNCCFSEDGSLLAVSFEEIVTIWD), 529 to 569 (WELK…CCWN), and 574 to 611 (ALEWNAKLNVRVMEPDPNSENIAAISQSSVGSDLFVFK). Lysine 466 carries the N6-acetyllysine modification. 2 positions are modified to phosphoserine: serine 664 and serine 672. Residue lysine 676 forms a Glycyl lysine isopeptide (Lys-Gly) (interchain with G-Cter in SUMO2) linkage. Positions 763-806 (SAKEIPEDVDMEEEKESEDSDEENDFTEKVQDTSNTGLGEDIIH) are disordered. The span at 769-787 (EDVDMEEEKESEDSDEEND) shows a compositional bias: acidic residues. Serine 779, serine 782, serine 796, and serine 811 each carry phosphoserine.

As to quaternary structure, component of the proposed t-UTP subcomplex of the ribosomal small subunit (SSU) processome. SSU processome is composed of more than 70 proteins and the RNA chaperone small nucleolar RNA (snoRNA) U3.

It localises to the nucleus. The protein localises to the nucleolus. Ribosome biogenesis factor. Part of the small subunit (SSU) processome, first precursor of the small eukaryotic ribosomal subunit. During the assembly of the SSU processome in the nucleolus, many ribosome biogenesis factors, an RNA chaperone and ribosomal proteins associate with the nascent pre-rRNA and work in concert to generate RNA folding, modifications, rearrangements and cleavage as well as targeted degradation of pre-ribosomal RNA by the RNA exosome. Involved in nucleolar processing of pre-18S ribosomal RNA. Required for optimal pre-ribosomal RNA transcription by RNA polymerase I. The sequence is that of WD repeat-containing protein 75 from Homo sapiens (Human).